Here is a 153-residue protein sequence, read N- to C-terminus: 6,7-dimethyl-8-ribityllumazine synthase (153 aa).

5-amino-6-(D-ribitylamino)uracil contacts are provided by residues Phe21, 55-57 (AFE), and 79-81 (TVI). A (2S)-2-hydroxy-3-oxobutyl phosphate-binding site is contributed by 84-85 (AT). His87 functions as the Proton donor in the catalytic mechanism. 5-amino-6-(D-ribitylamino)uracil is bound at residue Phe112. A (2S)-2-hydroxy-3-oxobutyl phosphate-binding site is contributed by Arg126.

The protein belongs to the DMRL synthase family. In terms of assembly, forms an icosahedral capsid composed of 60 subunits, arranged as a dodecamer of pentamers.

The catalysed reaction is (2S)-2-hydroxy-3-oxobutyl phosphate + 5-amino-6-(D-ribitylamino)uracil = 6,7-dimethyl-8-(1-D-ribityl)lumazine + phosphate + 2 H2O + H(+). Its pathway is cofactor biosynthesis; riboflavin biosynthesis; riboflavin from 2-hydroxy-3-oxobutyl phosphate and 5-amino-6-(D-ribitylamino)uracil: step 1/2. Its function is as follows. Catalyzes the formation of 6,7-dimethyl-8-ribityllumazine by condensation of 5-amino-6-(D-ribitylamino)uracil with 3,4-dihydroxy-2-butanone 4-phosphate. This is the penultimate step in the biosynthesis of riboflavin. The chain is 6,7-dimethyl-8-ribityllumazine synthase from Bacillus anthracis (strain A0248).